A 457-amino-acid polypeptide reads, in one-letter code: Bifunctional protein GlmU (457 aa).

The interval 1–230 (MPLSLPLHIV…AQEVEGVNDL (230 aa)) is pyrophosphorylase. Residues 12–15 (LAAG), Lys-26, Gln-78, 83–84 (GT), 105–107 (YGD), Gly-140, Glu-155, Asn-170, and Asn-228 each bind UDP-N-acetyl-alpha-D-glucosamine. Residue Asp-107 coordinates Mg(2+). Mg(2+) is bound at residue Asn-228. The linker stretch occupies residues 231–251 (WQLTQLERAWQIRAARALCLQ). An N-acetyltransferase region spans residues 252–457 (GARVADPARL…DGWQRPKKKT (206 aa)). UDP-N-acetyl-alpha-D-glucosamine contacts are provided by Arg-334 and Lys-352. His-364 serves as the catalytic Proton acceptor. Tyr-367 and Asn-378 together coordinate UDP-N-acetyl-alpha-D-glucosamine. Acetyl-CoA-binding positions include Ala-381, 387-388 (NY), Ser-406, Ala-424, and Arg-441.

The protein in the N-terminal section; belongs to the N-acetylglucosamine-1-phosphate uridyltransferase family. This sequence in the C-terminal section; belongs to the transferase hexapeptide repeat family. In terms of assembly, homotrimer. Requires Mg(2+) as cofactor.

The protein localises to the cytoplasm. The catalysed reaction is alpha-D-glucosamine 1-phosphate + acetyl-CoA = N-acetyl-alpha-D-glucosamine 1-phosphate + CoA + H(+). The enzyme catalyses N-acetyl-alpha-D-glucosamine 1-phosphate + UTP + H(+) = UDP-N-acetyl-alpha-D-glucosamine + diphosphate. The protein operates within nucleotide-sugar biosynthesis; UDP-N-acetyl-alpha-D-glucosamine biosynthesis; N-acetyl-alpha-D-glucosamine 1-phosphate from alpha-D-glucosamine 6-phosphate (route II): step 2/2. It functions in the pathway nucleotide-sugar biosynthesis; UDP-N-acetyl-alpha-D-glucosamine biosynthesis; UDP-N-acetyl-alpha-D-glucosamine from N-acetyl-alpha-D-glucosamine 1-phosphate: step 1/1. Its pathway is bacterial outer membrane biogenesis; LPS lipid A biosynthesis. Functionally, catalyzes the last two sequential reactions in the de novo biosynthetic pathway for UDP-N-acetylglucosamine (UDP-GlcNAc). The C-terminal domain catalyzes the transfer of acetyl group from acetyl coenzyme A to glucosamine-1-phosphate (GlcN-1-P) to produce N-acetylglucosamine-1-phosphate (GlcNAc-1-P), which is converted into UDP-GlcNAc by the transfer of uridine 5-monophosphate (from uridine 5-triphosphate), a reaction catalyzed by the N-terminal domain. The polypeptide is Bifunctional protein GlmU (Xylella fastidiosa (strain M23)).